The primary structure comprises 156 residues: ATP synthase subunit b (156 aa).

The chain crosses the membrane as a helical span at residues 7-27 (LFVQAIVFLILVLFTMKFVWP).

This sequence belongs to the ATPase B chain family. In terms of assembly, F-type ATPases have 2 components, F(1) - the catalytic core - and F(0) - the membrane proton channel. F(1) has five subunits: alpha(3), beta(3), gamma(1), delta(1), epsilon(1). F(0) has three main subunits: a(1), b(2) and c(10-14). The alpha and beta chains form an alternating ring which encloses part of the gamma chain. F(1) is attached to F(0) by a central stalk formed by the gamma and epsilon chains, while a peripheral stalk is formed by the delta and b chains.

The protein localises to the cell inner membrane. Its function is as follows. F(1)F(0) ATP synthase produces ATP from ADP in the presence of a proton or sodium gradient. F-type ATPases consist of two structural domains, F(1) containing the extramembraneous catalytic core and F(0) containing the membrane proton channel, linked together by a central stalk and a peripheral stalk. During catalysis, ATP synthesis in the catalytic domain of F(1) is coupled via a rotary mechanism of the central stalk subunits to proton translocation. Component of the F(0) channel, it forms part of the peripheral stalk, linking F(1) to F(0). The protein is ATP synthase subunit b of Acidovorax sp. (strain JS42).